Reading from the N-terminus, the 431-residue chain is Enolase (431 aa).

Q167 lines the (2R)-2-phosphoglycerate pocket. The Proton donor role is filled by E209. Mg(2+)-binding residues include D246, E289, and D316. K341, R370, S371, and K392 together coordinate (2R)-2-phosphoglycerate. K341 acts as the Proton acceptor in catalysis.

Belongs to the enolase family. In terms of assembly, component of the RNA degradosome, a multiprotein complex involved in RNA processing and mRNA degradation. Requires Mg(2+) as cofactor.

The protein resides in the cytoplasm. The protein localises to the secreted. It localises to the cell surface. The enzyme catalyses (2R)-2-phosphoglycerate = phosphoenolpyruvate + H2O. The protein operates within carbohydrate degradation; glycolysis; pyruvate from D-glyceraldehyde 3-phosphate: step 4/5. Its function is as follows. Catalyzes the reversible conversion of 2-phosphoglycerate (2-PG) into phosphoenolpyruvate (PEP). It is essential for the degradation of carbohydrates via glycolysis. The protein is Enolase of Shewanella sp. (strain MR-4).